The following is a 116-amino-acid chain: Proline-rich protein 9 (116 aa).

This is Proline-rich protein 9 (Prr9) from Mus musculus (Mouse).